A 151-amino-acid chain; its full sequence is Small ribosomal subunit protein uS11A (151 aa).

The segment at 131–151 is disordered; it reads DVTPIPSDSTRRKGGRRGRRL. Residues 142-151 show a composition bias toward basic residues; the sequence is RKGGRRGRRL.

The protein belongs to the universal ribosomal protein uS11 family.

This is Small ribosomal subunit protein uS11A from Drosophila melanogaster (Fruit fly).